Here is a 258-residue protein sequence, read N- to C-terminus: tRNA pseudouridine synthase A (258 aa).

D52 functions as the Nucleophile in the catalytic mechanism. Residue Y111 participates in substrate binding.

It belongs to the tRNA pseudouridine synthase TruA family. In terms of assembly, homodimer.

It carries out the reaction uridine(38/39/40) in tRNA = pseudouridine(38/39/40) in tRNA. In terms of biological role, formation of pseudouridine at positions 38, 39 and 40 in the anticodon stem and loop of transfer RNAs. This chain is tRNA pseudouridine synthase A, found in Azorhizobium caulinodans (strain ATCC 43989 / DSM 5975 / JCM 20966 / LMG 6465 / NBRC 14845 / NCIMB 13405 / ORS 571).